A 246-amino-acid polypeptide reads, in one-letter code: 2-C-methyl-D-erythritol 4-phosphate cytidylyltransferase (246 aa).

The protein belongs to the IspD/TarI cytidylyltransferase family. IspD subfamily.

It carries out the reaction 2-C-methyl-D-erythritol 4-phosphate + CTP + H(+) = 4-CDP-2-C-methyl-D-erythritol + diphosphate. It functions in the pathway isoprenoid biosynthesis; isopentenyl diphosphate biosynthesis via DXP pathway; isopentenyl diphosphate from 1-deoxy-D-xylulose 5-phosphate: step 2/6. Functionally, catalyzes the formation of 4-diphosphocytidyl-2-C-methyl-D-erythritol from CTP and 2-C-methyl-D-erythritol 4-phosphate (MEP). The polypeptide is 2-C-methyl-D-erythritol 4-phosphate cytidylyltransferase (Clostridium tetani (strain Massachusetts / E88)).